The chain runs to 591 residues: Thiol:disulfide interchange protein DsbD 1 (591 aa).

The first 18 residues, 1-18 (MRRLLTLILLLVALPAGA), serve as a signal peptide directing secretion. The Periplasmic segment spans residues 19–175 (GLFDSRPGAS…GPLEHKGKRS (157 aa)). Cystine bridges form between cysteine 134–cysteine 140 and cysteine 191–cysteine 313. The helical transmembrane segment at 176-196 (LLFFFLAGLTLTFTPCVLPML) threads the bilayer. The Cytoplasmic portion of the chain corresponds to 197 to 213 (PILSGVVLRGRPGGGRG). The chain crosses the membrane as a helical span at residues 214-234 (FVLSLAYVLPMALCFALLGAL). The Periplasmic segment spans residues 235 to 251 (MGMFGASLNLQAQLQSP). Residues 252-272 (WVLVPFAAFFALFAVAMFGFF) form a helical membrane-spanning segment. The Cytoplasmic portion of the chain corresponds to 273-295 (ELRLPGFIREPLDRLAGDARGGS). Residues 296–316 (ILGAATLGVLSSLLVSPCVSA) form a helical membrane-spanning segment. At 317–338 (PLAASLLYISASGDAWGGGLQL) the chain is on the periplasmic side. Residues 339-359 (FALGLGMGTPLVVFGAGGGAL) traverse the membrane as a helical segment. The Cytoplasmic portion of the chain corresponds to 360-365 (LPKSGA). Residues 366 to 386 (WMNGVRNAFGVLLLAVAVWLL) traverse the membrane as a helical segment. Topologically, residues 387–392 (ERVVSG) are periplasmic. The helical transmembrane segment at 393 to 413 (PVALMLWGMLAGGAGLALGAL) threads the bilayer. The Cytoplasmic portion of the chain corresponds to 414 to 423 (EFTPKSAARR). A helical membrane pass occupies residues 424 to 444 (LLQLLGLMFLTYAVAAWIGAL). At 445–591 (QGESDPIHPL…ERLRRAATRQ (147 aa)) the chain is on the periplasmic side. The Thioredoxin domain occupies 452-589 (HPLGRSVPSI…LAERLRRAAT (138 aa)). Cysteine 504 and cysteine 507 are joined by a disulfide.

The protein belongs to the thioredoxin family. DsbD subfamily.

The protein resides in the cell inner membrane. The enzyme catalyses [protein]-dithiol + NAD(+) = [protein]-disulfide + NADH + H(+). It carries out the reaction [protein]-dithiol + NADP(+) = [protein]-disulfide + NADPH + H(+). Required to facilitate the formation of correct disulfide bonds in some periplasmic proteins and for the assembly of the periplasmic c-type cytochromes. Acts by transferring electrons from cytoplasmic thioredoxin to the periplasm. This transfer involves a cascade of disulfide bond formation and reduction steps. This is Thiol:disulfide interchange protein DsbD 1 from Pseudomonas aeruginosa (strain ATCC 15692 / DSM 22644 / CIP 104116 / JCM 14847 / LMG 12228 / 1C / PRS 101 / PAO1).